The chain runs to 130 residues: Small ribosomal subunit protein uS8 (130 aa).

The protein belongs to the universal ribosomal protein uS8 family. As to quaternary structure, part of the 30S ribosomal subunit. Contacts proteins S5 and S12.

Its function is as follows. One of the primary rRNA binding proteins, it binds directly to 16S rRNA central domain where it helps coordinate assembly of the platform of the 30S subunit. The sequence is that of Small ribosomal subunit protein uS8 from Aster yellows witches'-broom phytoplasma (strain AYWB).